Reading from the N-terminus, the 341-residue chain is Nicotinate-nucleotide--dimethylbenzimidazole phosphoribosyltransferase (341 aa).

Catalysis depends on glutamate 306, which acts as the Proton acceptor.

This sequence belongs to the CobT family.

The enzyme catalyses 5,6-dimethylbenzimidazole + nicotinate beta-D-ribonucleotide = alpha-ribazole 5'-phosphate + nicotinate + H(+). It functions in the pathway nucleoside biosynthesis; alpha-ribazole biosynthesis; alpha-ribazole from 5,6-dimethylbenzimidazole: step 1/2. In terms of biological role, catalyzes the synthesis of alpha-ribazole-5'-phosphate from nicotinate mononucleotide (NAMN) and 5,6-dimethylbenzimidazole (DMB). This is Nicotinate-nucleotide--dimethylbenzimidazole phosphoribosyltransferase from Methylocella silvestris (strain DSM 15510 / CIP 108128 / LMG 27833 / NCIMB 13906 / BL2).